Consider the following 23-residue polypeptide: Aurein-4.3 (23 aa).

This sequence belongs to the frog skin active peptide (FSAP) family. Aurein subfamily. As to expression, expressed by the skin dorsal glands.

The protein localises to the secreted. In terms of biological role, has no antimicrobial or anticancer activity. The chain is Aurein-4.3 from Ranoidea aurea (Green and golden bell frog).